The sequence spans 117 residues: MKFFIAFACLLAVALANEDANVLRAEQQVNVDGFAYAVELDNSVNVQQKGDLNGEEWVVKGSQSWTSPENVPVSIQYIADANGYQVVSANPPLPTPPPIPEAIQRSLEYIAAHPPSQ.

The first 16 residues, 1 to 16 (MKFFIAFACLLAVALA), serve as a signal peptide directing secretion. One can recognise a Chitin-binding type R&amp;R domain in the interval 31-97 (VDGFAYAVEL…SANPPLPTPP (67 aa)).

Component of the larval cuticle. The sequence is that of Cuticular protein 47Eg (Cpr47Eg) from Drosophila melanogaster (Fruit fly).